The sequence spans 274 residues: Lipid phosphate phosphatase 1 (274 aa).

Topologically, residues 1–15 are lumenal; the sequence is MISVMADEKHKEYFK. A helical transmembrane segment spans residues 16–33; the sequence is LYYFQYMIIGLCTILFLY. The Cytoplasmic segment spans residues 34–69; that stretch reads SEISLVPRGQNIEFSLDDPSISKRYVPNELVGPLEC. The chain crosses the membrane as a helical span at residues 70 to 87; it reads LILSVGLSNMVVFWTCMF. The Lumenal segment spans residues 88 to 117; sequence DKDLLKKNRVKRLRERPDGISNDFHFMHTS. Residues 118-139 traverse the membrane as a helical segment; it reads ILCLMLIISINAALTGALKLII. Residues 136 to 144 form a phosphatase sequence motif I region; that stretch reads KLIIGNLRP. Residues 140-189 are Cytoplasmic-facing; that stretch reads GNLRPDFVDRCIPDLQKMSDSDSLVFGLDICKQTNKWILYEGLKSTPSGH. The interval 186 to 189 is phosphatase sequence motif II; sequence PSGH. Residues 190-203 form a helical membrane-spanning segment; it reads SSFIVSTMGFTYLW. The Lumenal segment spans residues 204–214; it reads QRVFTTRNTRS. The helical transmembrane segment at 215–231 threads the bilayer; that stretch reads CIWCPLLALVVMVSRVI. The segment at 228 to 239 is phosphatase sequence motif III; sequence SRVIDHRHHWYD. At 232–237 the chain is on the cytoplasmic side; that stretch reads DHRHHW. A helical transmembrane segment spans residues 238 to 255; it reads YDVVSGAVLAFLVIYCCW. Residues 256–274 lie on the Lumenal side of the membrane; it reads KWTFTNLAKRDILPSPVSV.

Belongs to the PA-phosphatase related phosphoesterase family.

It is found in the golgi apparatus membrane. It catalyses the reaction a 1,2-diacyl-sn-glycerol 3-diphosphate + H2O = a 1,2-diacyl-sn-glycero-3-phosphate + phosphate + H(+). The catalysed reaction is a 1,2-diacyl-sn-glycero-3-phosphate + H2O = a 1,2-diacyl-sn-glycerol + phosphate. It carries out the reaction a 1-acyl-sn-glycero-3-phosphate + H2O = a 1-acyl-sn-glycerol + phosphate. Its activity is regulated as follows. PA phosphatase activity is magnesium ion-independent and potently inhibited by N-ethylmaleimide. Also inhibited by phenylglyoxal and propranolol. Functionally, catalyzes the dephosphorylation of diacylglycerol diphosphate (DGPP) to phosphatidate (PA) and the subsequent dephosphorylation of PA to diacylglycerol (DAG). Together with DPP1, regulates intracellular DGPP and PA levels which are phospholipid molecules believed to play a signaling role in stress response. Can also use lysophosphatidic acid (LPA) as a substrate. Substrate preference is PA &gt; DGPP &gt; LPA. The sequence is that of Lipid phosphate phosphatase 1 (LPP1) from Saccharomyces cerevisiae (strain ATCC 204508 / S288c) (Baker's yeast).